The chain runs to 2190 residues: Highly-reducing polyketide synthase 1 (2190 aa).

The Ketosynthase family 3 (KS3) domain occupies 6 to 431 (LTPVAIVGYA…GANAHVVLGA (426 aa)). Catalysis depends on for beta-ketoacyl synthase activity residues Cys-179, His-315, and His-355. The 317-residue stretch at 541–857 (FVFTGQGAQW…VSVLARGQNA (317 aa)) folds into the Malonyl-CoA:ACP transacylase (MAT) domain. Residues 925 to 1061 (NDLLGSLADW…GLVGVRNSPA (137 aa)) are N-terminal hotdog fold. The PKS/mFAS DH domain maps to 925-1246 (NDLLGSLADW…MTPLRESSGS (322 aa)). Catalysis depends on His-957, which acts as the Proton acceptor; for dehydratase activity. Positions 1089-1246 (TETVDVQAMY…MTPLRESSGS (158 aa)) are C-terminal hotdog fold. Asp-1154 acts as the Proton donor; for dehydratase activity in catalysis. The Enoyl reductase (ER) domain maps to 1494–1804 (GSLDSFYFVD…SGKSMGKLVI (311 aa)). The region spanning 1828 to 2005 (ASYLIVGGTG…GTSLDLTAVS (178 aa)) is the Ketoreductase (KR) domain. The 78-residue stretch at 2107–2184 (KALEVLYGAL…ELAKLISKKS (78 aa)) folds into the Carrier domain. Ser-2144 bears the O-(pantetheine 4'-phosphoryl)serine mark.

Pantetheine 4'-phosphate serves as cofactor.

In terms of biological role, highly-reducing polyketide synthase; part of the gene cluster that mediates the biosynthesis of liamocins, glycolipids (also called heavy oils) composed of a single mannitol or arabitol headgroup linked to either three, four or even six 3,5-dihydroxydecanoic ester tail-groups. Within the pathway, PKS1 is responsible for biosynthesis of 3,5-dihydroxydecanoic acid from acetyl-CoA and malonyl-CoA. A phosphopantetheine transferase (PPTase) activates the HR-PKS. The esterase EST1 then catalyzes ester bond formation between 3,5-dihydroxydecanoic acid and mannitol (provided by the mannitol-1-phosphate 5-dehydrogenase and the NADP-dependent mannitol dehydrogenase) or arabinol (provided by the L-arabinitol 4-dehydrogenase). In Aureobasidium melanogenum (Aureobasidium pullulans var. melanogenum), this protein is Highly-reducing polyketide synthase 1.